The following is a 739-amino-acid chain: NAD(P)H-quinone oxidoreductase subunit 5, chloroplastic (739 aa).

A run of 16 helical transmembrane segments spans residues 9-29 (WIIP…LLLV), 39-59 (IWAF…ADLA), 89-109 (IDPL…MVLI), 125-145 (FAYM…SNLI), 147-167 (IYIF…FWFT), 185-205 (GDFG…SFEF), 224-244 (LFAA…SAQF), 258-278 (TPIS…FLVA), 280-300 (LLPL…IGII), 327-347 (LGYI…FHLI), 354-374 (ALLF…VGYS), 396-416 (TTFF…CFWS), 425-445 (WLYS…TAFY), 544-564 (LFPM…GIPF), 603-623 (IYSV…YGSV), and 716-736 (ISSY…IYYF).

This sequence belongs to the complex I subunit 5 family. In terms of assembly, NDH is composed of at least 16 different subunits, 5 of which are encoded in the nucleus.

The protein resides in the plastid. It localises to the chloroplast thylakoid membrane. It carries out the reaction a plastoquinone + NADH + (n+1) H(+)(in) = a plastoquinol + NAD(+) + n H(+)(out). The enzyme catalyses a plastoquinone + NADPH + (n+1) H(+)(in) = a plastoquinol + NADP(+) + n H(+)(out). Its function is as follows. NDH shuttles electrons from NAD(P)H:plastoquinone, via FMN and iron-sulfur (Fe-S) centers, to quinones in the photosynthetic chain and possibly in a chloroplast respiratory chain. The immediate electron acceptor for the enzyme in this species is believed to be plastoquinone. Couples the redox reaction to proton translocation, and thus conserves the redox energy in a proton gradient. This Acorus calamus (Sweet flag) protein is NAD(P)H-quinone oxidoreductase subunit 5, chloroplastic (ndhF).